Here is a 138-residue protein sequence, read N- to C-terminus: Putative nickel-responsive regulator (138 aa).

Ni(2+) is bound by residues His78, His89, His91, and Cys97.

Belongs to the transcriptional regulatory CopG/NikR family. Ni(2+) serves as cofactor.

Functionally, transcriptional regulator. In Pyrococcus horikoshii (strain ATCC 700860 / DSM 12428 / JCM 9974 / NBRC 100139 / OT-3), this protein is Putative nickel-responsive regulator.